A 342-amino-acid chain; its full sequence is Cytosolic Fe-S cluster assembly factor NBP35 (342 aa).

Residues S16–D42 are disordered. [4Fe-4S] cluster is bound by residues C30, C44, C47, and C53. G83–S90 serves as a coordination point for ATP. Residues C256 and C259 each coordinate [4Fe-4S] cluster.

Belongs to the Mrp/NBP35 ATP-binding proteins family. NUBP1/NBP35 subfamily. In terms of assembly, heterotetramer of 2 NBP35 and 2 CFD1 chains. It depends on [4Fe-4S] cluster as a cofactor.

It is found in the cytoplasm. In terms of biological role, component of the cytosolic iron-sulfur (Fe/S) protein assembly (CIA) machinery. Required for maturation of extramitochondrial Fe-S proteins. The NBP35-CFD1 heterotetramer forms a Fe-S scaffold complex, mediating the de novo assembly of an Fe-S cluster and its transfer to target apoproteins. In Coccidioides immitis (strain RS) (Valley fever fungus), this protein is Cytosolic Fe-S cluster assembly factor NBP35.